Here is a 309-residue protein sequence, read N- to C-terminus: Ornithine carbamoyltransferase (309 aa).

Carbamoyl phosphate-binding positions include 56–59 (STRT), Gln-83, Arg-107, and 134–137 (HPCQ). L-ornithine contacts are provided by residues Asn-165, Asp-223, and 227–228 (SM). Residues 263 to 264 (CL) and Arg-291 contribute to the carbamoyl phosphate site.

The protein belongs to the aspartate/ornithine carbamoyltransferase superfamily. OTCase family.

The protein resides in the cytoplasm. It catalyses the reaction carbamoyl phosphate + L-ornithine = L-citrulline + phosphate + H(+). It functions in the pathway amino-acid biosynthesis; L-arginine biosynthesis; L-arginine from L-ornithine and carbamoyl phosphate: step 1/3. Reversibly catalyzes the transfer of the carbamoyl group from carbamoyl phosphate (CP) to the N(epsilon) atom of ornithine (ORN) to produce L-citrulline. This Burkholderia lata (strain ATCC 17760 / DSM 23089 / LMG 22485 / NCIMB 9086 / R18194 / 383) protein is Ornithine carbamoyltransferase.